The sequence spans 179 residues: Large ribosomal subunit protein uL10 (179 aa).

It belongs to the universal ribosomal protein uL10 family. Part of the ribosomal stalk of the 50S ribosomal subunit. The N-terminus interacts with L11 and the large rRNA to form the base of the stalk. The C-terminus forms an elongated spine to which L12 dimers bind in a sequential fashion forming a multimeric L10(L12)X complex.

Its function is as follows. Forms part of the ribosomal stalk, playing a central role in the interaction of the ribosome with GTP-bound translation factors. This Mycolicibacterium vanbaalenii (strain DSM 7251 / JCM 13017 / BCRC 16820 / KCTC 9966 / NRRL B-24157 / PYR-1) (Mycobacterium vanbaalenii) protein is Large ribosomal subunit protein uL10.